The following is a 43-amino-acid chain: Large ribosomal subunit protein bL32 (43 aa).

Belongs to the bacterial ribosomal protein bL32 family.

The chain is Large ribosomal subunit protein bL32 (rpmF) from Carsonella ruddii (strain PV).